The following is a 921-amino-acid chain: Probable serine/threonine-protein kinase DDB_G0275165 (921 aa).

The 255-residue stretch at 23–277 folds into the Protein kinase domain; sequence FDPLSIIGSG…SNILGLLEYI (255 aa). ATP-binding positions include 29-37 and Lys-50; that span reads IGSGGFGKV. The Proton acceptor role is filled by Asp-147. 8 disordered regions span residues 289-453, 465-492, 530-571, 583-653, 671-698, 737-813, 833-858, and 877-921; these read DYEP…SFPR, RGEE…NEED, RPWN…SDSN, NPTP…PTTI, STAT…SNNN, IQPL…SRSL, SSQQ…TSQF, and FEKS…KPKK. Composition is skewed to low complexity over residues 310–352, 400–412, and 429–445; these read NNNN…NNNN, SNIN…NNSN, and NING…NNNN. 2 stretches are compositionally biased toward low complexity: residues 539-550 and 583-638; these read NNNNKNNNNNEK and NPTP…SLSS. The segment covering 643-653 has biased composition (polar residues); sequence PQSTYKVPTTI. Low complexity-rich tracts occupy residues 748 to 775, 842 to 857, and 892 to 910; these read TVAA…PTST, QPSS…PTSQ, and TSSS…PSSP.

Belongs to the protein kinase superfamily. TKL Ser/Thr protein kinase family.

It carries out the reaction L-seryl-[protein] + ATP = O-phospho-L-seryl-[protein] + ADP + H(+). The enzyme catalyses L-threonyl-[protein] + ATP = O-phospho-L-threonyl-[protein] + ADP + H(+). This is Probable serine/threonine-protein kinase DDB_G0275165 from Dictyostelium discoideum (Social amoeba).